Consider the following 105-residue polypeptide: NADH dehydrogenase [ubiquinone] 1 beta subcomplex subunit 2, mitochondrial (105 aa).

The N-terminal 33 residues, M1–H33, are a transit peptide targeting the mitochondrion. The tract at residues P85–D105 is disordered. Acidic residues predominate over residues T93–D105.

This sequence belongs to the complex I NDUFB2 subunit family. Complex I is composed of 45 different subunits.

The protein localises to the mitochondrion inner membrane. Its function is as follows. Accessory subunit of the mitochondrial membrane respiratory chain NADH dehydrogenase (Complex I), that is believed not to be involved in catalysis. Complex I functions in the transfer of electrons from NADH to the respiratory chain. The immediate electron acceptor for the enzyme is believed to be ubiquinone. This is NADH dehydrogenase [ubiquinone] 1 beta subcomplex subunit 2, mitochondrial (NDUFB2) from Pan troglodytes (Chimpanzee).